We begin with the raw amino-acid sequence, 169 residues long: T-cell receptor gamma chain C region DFL12 (169 aa).

Positions 1–136 are c region; the sequence is PSDKRLDADI…LQFMSTSAYY (136 aa). The chain crosses the membrane as a helical span at residues 137–157; it reads TYLLLLLKSVIYLAIISFSLL. Over 158–169 the chain is Cytoplasmic; sequence RRTSVCCNEKRS.

The protein resides in the membrane. This is T-cell receptor gamma chain C region DFL12 from Mus musculus (Mouse).